The primary structure comprises 212 residues: Thymidylate kinase (212 aa).

11–18 (GIEGSGKT) lines the ATP pocket.

The protein belongs to the thymidylate kinase family.

It carries out the reaction dTMP + ATP = dTDP + ADP. Phosphorylation of dTMP to form dTDP in both de novo and salvage pathways of dTTP synthesis. In Buchnera aphidicola subsp. Baizongia pistaciae (strain Bp), this protein is Thymidylate kinase.